The sequence spans 151 residues: Endoribonuclease YbeY (151 aa).

Zn(2+) contacts are provided by H113, H117, and H123.

The protein belongs to the endoribonuclease YbeY family. It depends on Zn(2+) as a cofactor.

Its subcellular location is the cytoplasm. Functionally, single strand-specific metallo-endoribonuclease involved in late-stage 70S ribosome quality control and in maturation of the 3' terminus of the 16S rRNA. In Polaromonas naphthalenivorans (strain CJ2), this protein is Endoribonuclease YbeY.